The following is a 331-amino-acid chain: DNA-directed RNA polymerase subunit alpha (331 aa).

The alpha N-terminal domain (alpha-NTD) stretch occupies residues 1 to 226 (MLIAQRPTLT…ELFGLCRELN (226 aa)). Residues 243–331 (TNPEMAVPIE…GGTFFSPEDE (89 aa)) form an alpha C-terminal domain (alpha-CTD) region.

This sequence belongs to the RNA polymerase alpha chain family. In terms of assembly, homodimer. The RNAP catalytic core consists of 2 alpha, 1 beta, 1 beta' and 1 omega subunit. When a sigma factor is associated with the core the holoenzyme is formed, which can initiate transcription.

It carries out the reaction RNA(n) + a ribonucleoside 5'-triphosphate = RNA(n+1) + diphosphate. In terms of biological role, DNA-dependent RNA polymerase catalyzes the transcription of DNA into RNA using the four ribonucleoside triphosphates as substrates. The sequence is that of DNA-directed RNA polymerase subunit alpha from Bifidobacterium longum (strain NCC 2705).